The chain runs to 223 residues: Urease accessory protein UreG (223 aa).

The segment at 1–30 is disordered; it reads MAKHSHDHTHDHHDRPRRVRKPGEPLRIGV. Residue 32 to 39 participates in GTP binding; that stretch reads GPVGSGKT.

This sequence belongs to the SIMIBI class G3E GTPase family. UreG subfamily. In terms of assembly, homodimer. UreD, UreF and UreG form a complex that acts as a GTP-hydrolysis-dependent molecular chaperone, activating the urease apoprotein by helping to assemble the nickel containing metallocenter of UreC. The UreE protein probably delivers the nickel.

It localises to the cytoplasm. Facilitates the functional incorporation of the urease nickel metallocenter. This process requires GTP hydrolysis, probably effectuated by UreG. This chain is Urease accessory protein UreG, found in Mycobacterium ulcerans (strain Agy99).